The following is a 318-amino-acid chain: NADH-quinone oxidoreductase subunit H 2 (318 aa).

9 consecutive transmembrane segments (helical) span residues 4–24, 77–97, 106–126, 146–166, 179–199, 214–234, 238–258, 262–282, and 293–313; these read LLIALFSLILLLALLGAAGVF, LAPALAAFPMLAGFGVVAFAP, VGVLFVMGMLALTVWALVLGA, LAYESFLGLSLMGCVLLAGSF, LWFILLQPLGAALFFLAGLAA, LVAGFMTEYSGMSFALFFLGE, ILLVAALFTTLFLGGWAGPIL, IWFGLKVAAISVVFVWLRAAL, and FAWKVALPLALLNLLVTAWIA.

This sequence belongs to the complex I subunit 1 family. As to quaternary structure, NDH-1 is composed of 14 different subunits. Subunits NuoA, H, J, K, L, M, N constitute the membrane sector of the complex.

Its subcellular location is the cell inner membrane. The enzyme catalyses a quinone + NADH + 5 H(+)(in) = a quinol + NAD(+) + 4 H(+)(out). Its function is as follows. NDH-1 shuttles electrons from NADH, via FMN and iron-sulfur (Fe-S) centers, to quinones in the respiratory chain. The immediate electron acceptor for the enzyme in this species is believed to be ubiquinone. Couples the redox reaction to proton translocation (for every two electrons transferred, four hydrogen ions are translocated across the cytoplasmic membrane), and thus conserves the redox energy in a proton gradient. This subunit may bind ubiquinone. This chain is NADH-quinone oxidoreductase subunit H 2, found in Cereibacter sphaeroides (strain ATCC 17023 / DSM 158 / JCM 6121 / CCUG 31486 / LMG 2827 / NBRC 12203 / NCIMB 8253 / ATH 2.4.1.) (Rhodobacter sphaeroides).